A 1093-amino-acid polypeptide reads, in one-letter code: Protein transport protein Sec24A (1093 aa).

4 disordered regions span residues 1-29 (MSQP…SGSP), 60-168 (HPIP…TSLT), 189-226 (GPSV…ALTP), and 294-328 (SLPP…TQTP). Composition is skewed to polar residues over residues 112-126 (ASQN…SSSF) and 138-168 (WQYN…TSLT). Composition is skewed to pro residues over residues 191–201 (SVPPLVNPPLP) and 209–221 (PHGP…PPPV). Polar residues predominate over residues 299-328 (YQNTTPPGATGVPPSSLNYPSGPQAFTQTP). The Zn(2+) site is built by cysteine 431, cysteine 434, cysteine 452, and cysteine 455. The zinc finger-like stretch occupies residues 431–455 (CRSCRTYINPFVSFLDQRRWKCNLC). The stretch at 966–1038 (PQPPILQLSV…TPESARIIAF (73 aa)) is one Gelsolin-like repeat.

It belongs to the SEC23/SEC24 family. SEC24 subfamily. As to quaternary structure, COPII is composed of at least five proteins: the Sec23/24 complex, the Sec13/31 complex and Sar1. Interacts with TMED2. Interacts (as part of the Sec23/24 complex) with SEC22B; recruits SEC22B into COPII-coated vesicles for its transport from the endoplasmic reticulum to the Golgi. Interacts with STING1; promoting STING1 translocation to COPII vesicles in a STEEP1-dependent manner. Interacts with TMEM39A. Interacts with SACM1L; this interaction is reduced in the absence of TMEM39A. Interacts with kinase FAM20C; transport of FAM20C from the endoplasmic reticulum to the Golgi is likely to be mediated by COPII vesicles.

It localises to the cytoplasmic vesicle. The protein localises to the COPII-coated vesicle membrane. The protein resides in the endoplasmic reticulum membrane. It is found in the cytoplasm. Its subcellular location is the cytosol. Functionally, component of the coat protein complex II (COPII) which promotes the formation of transport vesicles from the endoplasmic reticulum (ER). The coat has two main functions, the physical deformation of the endoplasmic reticulum membrane into vesicles and the selection of cargo molecules for their transport to the Golgi complex. Plays a central role in cargo selection within the COPII complex and together with SEC24B may have a different specificity compared to SEC24C and SEC24D. May package preferentially cargos with cytoplasmic DxE or LxxLE motifs and may also recognize conformational epitopes. This chain is Protein transport protein Sec24A, found in Homo sapiens (Human).